A 264-amino-acid chain; its full sequence is H-2 class II histocompatibility antigen, E-B beta chain (264 aa).

The N-terminal stretch at 1–26 (MVWLPRVPCVAAVILLLTVLSPPMAL) is a signal peptide. Residues 27-121 (VRDSRPWFLE…ISDKFLVRRR (95 aa)) form a beta-1 region. The Extracellular segment spans residues 27 to 225 (VRDSRPWFLE…KAQSTSAQNK (199 aa)). 2 disulfide bridges follow: C38–C106 and C144–C200. N46 is a glycosylation site (N-linked (GlcNAc...) asparagine). The segment at 122 to 225 (VEPTVTVYPT…KAQSTSAQNK (104 aa)) is beta-2. One can recognise an Ig-like C1-type domain in the interval 124-214 (PTVTVYPTKT…PSLTDPVTVE (91 aa)). Residues 226–246 (MLSGVGGFVLGLLFLGAGLFI) traverse the membrane as a helical segment. Residues 247–264 (YFRNQKGQSGLQPTGLLS) are Cytoplasmic-facing.

This sequence belongs to the MHC class II family. In terms of processing, ubiquitinated in immature dendritic cells leading to down-regulation of MHC class II.

The protein resides in the membrane. The polypeptide is H-2 class II histocompatibility antigen, E-B beta chain (H2-Eb1) (Mus musculus (Mouse)).